The chain runs to 127 residues: Cold-regulated protein 1 (127 aa).

A disordered region spans residues Ala39–Arg127. Over residues Ser85–Met101 the composition is skewed to basic residues. The span at Pro102 to Pro121 shows a compositional bias: low complexity.

In Hordeum vulgare (Barley), this protein is Cold-regulated protein 1.